The chain runs to 141 residues: Large-conductance mechanosensitive channel (141 aa).

3 consecutive transmembrane segments (helical) span residues 14–34 (VVDLAVGVIIGAAFGAIVNSL), 38–58 (VIMPIIGAVTGGLDFSNYYIP), and 82–102 (GQFLTLAVNFTIIAFVLFMVI).

Belongs to the MscL family. Homopentamer.

It is found in the cell inner membrane. Its function is as follows. Channel that opens in response to stretch forces in the membrane lipid bilayer. May participate in the regulation of osmotic pressure changes within the cell. In Methylorubrum extorquens (strain CM4 / NCIMB 13688) (Methylobacterium extorquens), this protein is Large-conductance mechanosensitive channel.